We begin with the raw amino-acid sequence, 388 residues long: 3-dehydroquinate synthase (388 aa).

This sequence belongs to the archaeal-type DHQ synthase family.

The catalysed reaction is 2-amino-2,3,7-trideoxy-D-lyxo-hept-6-ulosonate + NAD(+) + H2O = 3-dehydroquinate + NH4(+) + NADH + H(+). Catalyzes the oxidative deamination and cyclization of 2-amino-3,7-dideoxy-D-threo-hept-6-ulosonic acid (ADH) to yield 3-dehydroquinate (DHQ), which is fed into the canonical shikimic pathway of aromatic amino acid biosynthesis. The protein is 3-dehydroquinate synthase of Haloarcula marismortui (strain ATCC 43049 / DSM 3752 / JCM 8966 / VKM B-1809) (Halobacterium marismortui).